The sequence spans 141 residues: Large ribosomal subunit protein uL11 (141 aa).

The protein belongs to the universal ribosomal protein uL11 family. As to quaternary structure, part of the ribosomal stalk of the 50S ribosomal subunit. Interacts with L10 and the large rRNA to form the base of the stalk. L10 forms an elongated spine to which L12 dimers bind in a sequential fashion forming a multimeric L10(L12)X complex. In terms of processing, one or more lysine residues are methylated.

Forms part of the ribosomal stalk which helps the ribosome interact with GTP-bound translation factors. The chain is Large ribosomal subunit protein uL11 from Trichlorobacter lovleyi (strain ATCC BAA-1151 / DSM 17278 / SZ) (Geobacter lovleyi).